A 424-amino-acid polypeptide reads, in one-letter code: Protein UL117 (424 aa).

Residues 57-82 (IVPTTSSSLAPPRDDERRPTPPLRPP) form a disordered region.

The protein belongs to the herpesviridae U84 family.

Its subcellular location is the host nucleus. Its function is as follows. Plays a role in the inhibition of host DNA replication in the infected cell. Targets the mini-chromosome maintenance (MCM) complex and blocks the accumulation of MCM proteins and their loading onto host chromatin. In Human cytomegalovirus (strain AD169) (HHV-5), this protein is Protein UL117 (UL117).